Reading from the N-terminus, the 565-residue chain is Transmembrane 7 superfamily member 3 (565 aa).

The signal sequence occupies residues 1 to 21 (MWRLRLLVLAVLAAGSAEAQA). N-linked (GlcNAc...) asparagine glycosylation is found at Asn-22, Asn-56, Asn-70, and Asn-259. Transmembrane regions (helical) follow at residues 287-307 (VSTKVFSTLFALLGLFTCFFG), 311-331 (WKTELFFVGFIFLGFFFYILI), 341-361 (VRLVLTAVAGSIGGLLLVASW), 364-384 (FGILTLCMLCVGLVLGFLVSS), 402-422 (VFWVTFSCIALLVPVIFLGCL), 427-447 (ILACGIVGSYSVVLAINSYMF), and 478-498 (NDYIILAVWGMLAVTGITLQI).

The protein localises to the cell membrane. Functionally, involved in the inhibition of cytokine-induced death of pancreatic beta cells. Involved in the promotion of insulin secretion from pancreatic beta cells. Is a downstream transcriptional target of p53/TP53, and acts as a pro-survival homeostatic factor that attenuates the development of cellular stress. Maintains protein homeostasis and promotes cell survival through attenuation of endoplasmic reticulum (ER) stress and the subsequent induction of unfolded protein response (UPR). In Rattus norvegicus (Rat), this protein is Transmembrane 7 superfamily member 3 (Tm7sf3).